The chain runs to 343 residues: Zinc finger protein STP3 (343 aa).

Disordered stretches follow at residues 31–56 (YNGE…SGSA) and 71–140 (SNDV…KPRK). Over residues 33–45 (GEASSASTHPTLP) the composition is skewed to polar residues. 3 stretches are compositionally biased toward low complexity: residues 46–56 (NMNISNGSGSA), 71–86 (SNDV…FLPS), and 94–120 (SASA…AGPS). 2 positions are modified to phosphoserine: serine 71 and serine 111. The C2H2-type zinc-finger motif lies at 169-191 (HKCPICHRGFARNNDLLRHKKRH). Residues 198-222 (SQSGVLSNHNDGKGGSVSPNDDDTH) are disordered.

It localises to the nucleus. In Saccharomyces cerevisiae (strain ATCC 204508 / S288c) (Baker's yeast), this protein is Zinc finger protein STP3 (STP3).